Here is a 338-residue protein sequence, read N- to C-terminus: Ketol-acid reductoisomerase (NADP(+)) (338 aa).

A KARI N-terminal Rossmann domain is found at 1–181 (MKVFYDKDAD…GGGRAGIIET (181 aa)). NADP(+) contacts are provided by residues 24–27 (YGSQ), Arg47, and Ser52. The active site involves His107. Gly133 provides a ligand contact to NADP(+). Residues 182–327 (NFREETETDL…AKLRAMMPWI (146 aa)) enclose the KARI C-terminal knotted domain. Asp190, Glu194, Glu226, and Glu230 together coordinate Mg(2+). Substrate is bound at residue Ser251.

The protein belongs to the ketol-acid reductoisomerase family. Requires Mg(2+) as cofactor.

It catalyses the reaction (2R)-2,3-dihydroxy-3-methylbutanoate + NADP(+) = (2S)-2-acetolactate + NADPH + H(+). It carries out the reaction (2R,3R)-2,3-dihydroxy-3-methylpentanoate + NADP(+) = (S)-2-ethyl-2-hydroxy-3-oxobutanoate + NADPH + H(+). It functions in the pathway amino-acid biosynthesis; L-isoleucine biosynthesis; L-isoleucine from 2-oxobutanoate: step 2/4. The protein operates within amino-acid biosynthesis; L-valine biosynthesis; L-valine from pyruvate: step 2/4. Its function is as follows. Involved in the biosynthesis of branched-chain amino acids (BCAA). Catalyzes an alkyl-migration followed by a ketol-acid reduction of (S)-2-acetolactate (S2AL) to yield (R)-2,3-dihydroxy-isovalerate. In the isomerase reaction, S2AL is rearranged via a Mg-dependent methyl migration to produce 3-hydroxy-3-methyl-2-ketobutyrate (HMKB). In the reductase reaction, this 2-ketoacid undergoes a metal-dependent reduction by NADPH to yield (R)-2,3-dihydroxy-isovalerate. The sequence is that of Ketol-acid reductoisomerase (NADP(+)) from Ralstonia pickettii (strain 12J).